The following is a 481-amino-acid chain: Leukocyte immunoglobulin-like receptor subfamily A member 6 (481 aa).

Residues 1–23 (MTPALTALLCLGLSLGPRTRVQA) form the signal peptide. The Extracellular segment spans residues 24-447 (GPFPKPTLWA…SHAKDYTVEN (424 aa)). Cys-49 and Cys-98 are oxidised to a cystine. Residues 59–70 (QLDKEGSPEPLD) are compositionally biased toward basic and acidic residues. Residues 59–78 (QLDKEGSPEPLDRNNPLEPK) are disordered. A glycan (N-linked (GlcNAc...) asparagine) is linked at Asn-139. Disulfide bonds link Cys-144-Cys-196 and Cys-245-Cys-296. Ig-like C2-type domains are found at residues 225–314 (PSLL…DPLN) and 323–408 (DTVS…HLLS). 2 N-linked (GlcNAc...) asparagine glycosylation sites follow: Asn-301 and Asn-340. An intrachain disulfide couples Cys-345 to Cys-396. Positions 419 to 439 (SGHSGGSSLPPTGPPSTPASH) are disordered. The chain crosses the membrane as a helical span at residues 448–468 (LIRMGMAGLVLVFLGILLFEA). Over 469–481 (QHSQRNPQDAAGR) the chain is Cytoplasmic.

Its subcellular location is the membrane. In terms of biological role, may act as receptor for class I MHC antigens. The polypeptide is Leukocyte immunoglobulin-like receptor subfamily A member 6 (LILRA6) (Homo sapiens (Human)).